The sequence spans 137 residues: Putative pre-16S rRNA nuclease (137 aa).

Belongs to the YqgF nuclease family.

Its subcellular location is the cytoplasm. Functionally, could be a nuclease involved in processing of the 5'-end of pre-16S rRNA. This chain is Putative pre-16S rRNA nuclease, found in Oceanobacillus iheyensis (strain DSM 14371 / CIP 107618 / JCM 11309 / KCTC 3954 / HTE831).